Consider the following 281-residue polypeptide: BURP domain-containing protein BNM2C (281 aa).

Positions 1-25 are cleaved as a signal peptide; sequence MASLRFSVTFPALFSLLLSLWVVDA. Positions 59–281 constitute a BURP domain; sequence FFKISDLKLG…PLDNIVWVSK (223 aa).

In terms of tissue distribution, expressed in the radicle of germinating seeds 2 days post-imbibition (DPI) and in roots of 30-DPI young plants. Expressed in the embryo and seed coat tissues of developing seeds. The protein accumulates only in seeds and only long after transcript accumulation becomes evident.

It localises to the protein storage vacuole. The sequence is that of BURP domain-containing protein BNM2C from Brassica napus (Rape).